A 26-amino-acid polypeptide reads, in one-letter code: ANPICPKIPNPTIRISGRNDLCVDVK.

Disulfide-linked dimer of A and B chains. Glycosylated. High-mannose type oligosaccharides.

Its function is as follows. Lectin specific for galactose (Gal) and its derivatives. Induces apoptosis. Has cytotoxic activity against several human cancer cell lines. Is less cytotoxic to normal human cells. This chain is Aralin B chain, found in Aralia elata (Japanese angelica tree).